The sequence spans 287 residues: Phosphatidylserine decarboxylase proenzyme (287 aa).

Residues D89, H146, and S252 each act as charge relay system; for autoendoproteolytic cleavage activity in the active site. The Schiff-base intermediate with substrate; via pyruvic acid; for decarboxylase activity role is filled by S252. S252 carries the post-translational modification Pyruvic acid (Ser); by autocatalysis.

It belongs to the phosphatidylserine decarboxylase family. PSD-B subfamily. Prokaryotic type I sub-subfamily. Heterodimer of a large membrane-associated beta subunit and a small pyruvoyl-containing alpha subunit. The cofactor is pyruvate. Post-translationally, is synthesized initially as an inactive proenzyme. Formation of the active enzyme involves a self-maturation process in which the active site pyruvoyl group is generated from an internal serine residue via an autocatalytic post-translational modification. Two non-identical subunits are generated from the proenzyme in this reaction, and the pyruvate is formed at the N-terminus of the alpha chain, which is derived from the carboxyl end of the proenzyme. The autoendoproteolytic cleavage occurs by a canonical serine protease mechanism, in which the side chain hydroxyl group of the serine supplies its oxygen atom to form the C-terminus of the beta chain, while the remainder of the serine residue undergoes an oxidative deamination to produce ammonia and the pyruvoyl prosthetic group on the alpha chain. During this reaction, the Ser that is part of the protease active site of the proenzyme becomes the pyruvoyl prosthetic group, which constitutes an essential element of the active site of the mature decarboxylase.

It localises to the cell membrane. The catalysed reaction is a 1,2-diacyl-sn-glycero-3-phospho-L-serine + H(+) = a 1,2-diacyl-sn-glycero-3-phosphoethanolamine + CO2. The protein operates within phospholipid metabolism; phosphatidylethanolamine biosynthesis; phosphatidylethanolamine from CDP-diacylglycerol: step 2/2. Catalyzes the formation of phosphatidylethanolamine (PtdEtn) from phosphatidylserine (PtdSer). This is Phosphatidylserine decarboxylase proenzyme from Shewanella woodyi (strain ATCC 51908 / MS32).